The sequence spans 212 residues: MQLSLALCLVCLLVHAAFRVVEGQGWQAFKNDATEIIPELGEYPEPLPELNNKTMNRAENGGRPPHHPFETKDASEYSCRELHFTRYVTDGPCRSAKPVTELVCSGQCGPARLLPNAIGRGKWWRPSGPDFRCIPDRYRAQRVQLLCPGGAAPRARKVRLVASCKCKRLTRFHNQSELKDFGPEAARPQTGRKLRPRARGTKASRAELENAY.

The signal sequence occupies residues 1–23 (MQLSLALCLVCLLVHAAFRVVEG). Asparagine 52 is a glycosylation site (N-linked (GlcNAc...) asparagine). 4 disulfide bridges follow: cysteine 79-cysteine 133, cysteine 93-cysteine 147, cysteine 104-cysteine 164, and cysteine 108-cysteine 166. Positions 81 to 171 (ELHFTRYVTD…ASCKCKRLTR (91 aa)) constitute a CTCK domain. A glycan (N-linked (GlcNAc...) asparagine) is linked at asparagine 174. The disordered stretch occupies residues 179 to 212 (KDFGPEAARPQTGRKLRPRARGTKASRAELENAY). Residues 190 to 202 (TGRKLRPRARGTK) are compositionally biased toward basic residues.

This sequence belongs to the sclerostin family. In terms of assembly, interacts with LRP4 (via the extracellular domain); the interaction facilitates the inhibition of Wnt signaling. Interacts with LRP5 (via the first two YWTD-EGF repeat domains); the interaction inhibits Wnt-mediated signaling. Interacts with LRP6.

The protein resides in the secreted. Its subcellular location is the extracellular space. It is found in the extracellular matrix. Negative regulator of bone growth that acts through inhibition of Wnt signaling and bone formation. The sequence is that of Sclerostin from Bos taurus (Bovine).